A 478-amino-acid chain; its full sequence is MKTWLMGFSEFLLRYKLVWSETWKIRKQLDTPVREKDENEFLPAHLELIETPVSRRPRLVAYFIMGFLVIAFILSVLGQVEIVATANGKLTLSGRSKEIKPIENSIVKEIIVKEGESVRKGDVLLKLTALGAEADTLKTQSSLLQARLEQIRYQILSRSIELNKLPELKLPDEPYFQNVSEEEVLRLTSLIKEQFSTWQNQKYQKELNLDKKRAERLTILARINRYENVSRVEKSRLDDFRSLLHKQAIAKHAVLEQENKYVEAANELRVYKSQLEQIESEILSAKEEYQLVTQLFKNEILDKLRQTTDSIELLTLELEKNEERQQASVIRAPVSGKVQQLKVHTEGGVVTTAETLMVIVPEDDTLEVTALVQNKDIGFINVGQNAIIKVEAFPYTRYGYLVGKVKNINLDAIEDQKLGLVFNVIVSVEENDLSTGNKHIPLSSGMAVTAEIKTGMRSVISYLLSPLEESVTESLHER.

Over 1–59 (MKTWLMGFSEFLLRYKLVWSETWKIRKQLDTPVREKDENEFLPAHLELIETPVSRRPRL) the chain is Cytoplasmic. The helical; Signal-anchor for type II membrane protein transmembrane segment at 60–80 (VAYFIMGFLVIAFILSVLGQV) threads the bilayer. The Periplasmic segment spans residues 81 to 478 (EIVATANGKL…ESVTESLHER (398 aa)).

This sequence belongs to the membrane fusion protein (MFP) (TC 8.A.1) family.

It is found in the cell inner membrane. Involved in the transport of hemolysin A. This Escherichia coli protein is Hemolysin secretion protein D, chromosomal (hlyD).